We begin with the raw amino-acid sequence, 398 residues long: UPF0229 protein Ccel_0490 (398 aa).

Disordered stretches follow at residues methionine 1–histidine 22 and lysine 68–glycine 104. 2 stretches are compositionally biased toward basic and acidic residues: residues glycine 11–histidine 22 and glycine 78–glycine 95.

It belongs to the UPF0229 family.

The protein is UPF0229 protein Ccel_0490 of Ruminiclostridium cellulolyticum (strain ATCC 35319 / DSM 5812 / JCM 6584 / H10) (Clostridium cellulolyticum).